Consider the following 189-residue polypeptide: UPF0301 protein PSEEN5058 (189 aa).

The protein belongs to the UPF0301 (AlgH) family.

The protein is UPF0301 protein PSEEN5058 of Pseudomonas entomophila (strain L48).